Reading from the N-terminus, the 102-residue chain is COX assembly mitochondrial protein 2 homolog (102 aa).

Residues 11 to 55 form the CHCH domain; it reads TKECNMLIEFLQRCHSEKPIGKMIGKCSYWDEAVWQCTKKERIWR. 2 short sequence motifs (cx9C motif) span residues 14 to 24 and 37 to 47; these read CNMLIEFLQRC and CSYWDEAVWQC. 2 disulfides stabilise this stretch: cysteine 14–cysteine 47 and cysteine 24–cysteine 37.

The protein belongs to the CMC family.

It localises to the mitochondrion. Functionally, may be involved in cytochrome c oxidase biogenesis. This Caenorhabditis elegans protein is COX assembly mitochondrial protein 2 homolog.